We begin with the raw amino-acid sequence, 291 residues long: Nucleotide-binding protein Lm4b_02443 (291 aa).

An ATP-binding site is contributed by 13 to 20; it reads GMSGAGKT. 63–66 serves as a coordination point for GTP; it reads DLRG.

This sequence belongs to the RapZ-like family.

Displays ATPase and GTPase activities. The chain is Nucleotide-binding protein Lm4b_02443 from Listeria monocytogenes serotype 4b (strain CLIP80459).